Reading from the N-terminus, the 999-residue chain is Golgin subfamily A member 2 (999 aa).

Over residues 1-11 (MWPPRFPPPRP) the composition is skewed to pro residues. 2 disordered regions span residues 1-80 (MWPP…PAPP) and 244-288 (ARQK…YNKD). The segment at 1 to 86 (MWPPRFPPPR…PAPPTAATDT (86 aa)) is interaction with p115/USO1. 2 positions are modified to dimethylated arginine: Arg-18 and Arg-30. Positions 26–49 (KKKLREYQQKNSPGVPAGAKKKKK) match the Nuclear localization signal motif. 4 positions are modified to phosphoserine: Ser-37, Ser-66, Ser-273, and Ser-438. Residues 147–895 (LTSSNMKELE…VLRLVNERNE (749 aa)) are a coiled coil. Over residues 271–280 (TLSTVSTQQK) the composition is skewed to polar residues. The segment at 444–468 (SQMEEPPPPEPPAGPSEAEEQLQGE) is disordered. Residues 448 to 457 (EPPPPEPPAG) are compositionally biased toward pro residues. Phosphoserine is present on residues Ser-697, Ser-934, and Ser-978. Residues 989–999 (DENDEVKIMVV) form an interaction with GORASP1/GRASP65 region.

It belongs to the GOLGA2 family. Homodimer, may assemble into homohexamers. Homotetramer; forms a parallel homotetramer with a flexible rod-like structure that can give rise to I- and Y-shaped conformations. Interacts with GORASP1/GRASP65. The homooligomer forms a complex with GORASP1 with a 1:1 stoichiometry. Interacts with RAB1B that has been activated by GTP-binding. Interacts with p115/USO1; interaction with p115/USO1 inhibits interaction with STX5 and/or RAB1B. Interacts with STX5. Interacts with ZFPL1. Interacts with AKAP450/AKAP9; leading to recruit AKAP450/AKAP9 to the cis-Golgi. Post-translationally, phosphorylated at Ser-37 by CDK1 at the onset of mitosis, inhibiting the interaction with p115/USO1 and triggering Golgi disassembly. A report however suggests that Golgi disassembly is independent of phosphorylation at Ser-37. Phosphorylated at Ser-37 in prophase as the Golgi complex starts to break down, and remains phosphorylated during further breakdown and partitioning of the Golgi fragments in metaphase and anaphase. In telophase, GM130 is dephosphorylated by PP2A as the Golgi fragments start to reassemble. In terms of processing, cleaved by caspases at the onset of apoptosis. Methylation by PRMT5 is required for Golgi ribbon formation. In terms of tissue distribution, widely expressed. Detected in brain, kidney, lung, liver, spleen, heart, skeletal muscle, thymus and pancreas. Detected in spermatocytes. Present in oocytes during all oocyte meiotic maturation (at protein level).

Its subcellular location is the golgi apparatus. The protein localises to the cis-Golgi network membrane. The protein resides in the endoplasmic reticulum-Golgi intermediate compartment membrane. It is found in the cytoplasm. It localises to the cytoskeleton. Its subcellular location is the spindle pole. Peripheral membrane component of the cis-Golgi stack that acts as a membrane skeleton that maintains the structure of the Golgi apparatus, and as a vesicle thether that facilitates vesicle fusion to the Golgi membrane. Required for normal protein transport from the endoplasmic reticulum to the Golgi apparatus and the cell membrane. Together with p115/USO1 and STX5, involved in vesicle tethering and fusion at the cis-Golgi membrane to maintain the stacked and inter-connected structure of the Golgi apparatus. Plays a central role in mitotic Golgi disassembly: phosphorylation at Ser-37 by CDK1 at the onset of mitosis inhibits the interaction with p115/USO1, preventing tethering of COPI vesicles and thereby inhibiting transport through the Golgi apparatus during mitosis. Also plays a key role in spindle pole assembly and centrosome organization. Promotes the mitotic spindle pole assembly by activating the spindle assembly factor TPX2 to nucleate microtubules around the Golgi and capture them to couple mitotic membranes to the spindle: upon phosphorylation at the onset of mitosis, GOLGA2 interacts with importin-alpha via the nuclear localization signal region, leading to recruit importin-alpha to the Golgi membranes and liberate the spindle assembly factor TPX2 from importin-alpha. TPX2 then activates AURKA kinase and stimulates local microtubule nucleation. Upon filament assembly, nascent microtubules are further captured by GOLGA2, thus linking Golgi membranes to the spindle. Regulates the meiotic spindle pole assembly, probably via the same mechanism. Also regulates the centrosome organization. Also required for the Golgi ribbon formation and glycosylation of membrane and secretory proteins. The sequence is that of Golgin subfamily A member 2 (Golga2) from Mus musculus (Mouse).